The chain runs to 153 residues: Superoxide dismutase [Cu-Zn] (153 aa).

The Cu cation site is built by histidine 45, histidine 47, and histidine 62. A disulfide bridge links cysteine 56 with cysteine 145. Residues histidine 62, histidine 70, histidine 79, and aspartate 82 each coordinate Zn(2+). Histidine 119 lines the Cu cation pocket.

The protein belongs to the Cu-Zn superoxide dismutase family. Homodimer. Cu cation is required as a cofactor. Zn(2+) serves as cofactor.

It is found in the cytoplasm. The catalysed reaction is 2 superoxide + 2 H(+) = H2O2 + O2. Its function is as follows. Destroys radicals which are normally produced within the cells and which are toxic to biological systems. The chain is Superoxide dismutase [Cu-Zn] from Drosophila virilis (Fruit fly).